The chain runs to 1391 residues: MNLLNLFNPLQTAGMEEEFDAIKIGIASPETIRSWSYGEVKKPETINYRTFKPERDGLFCAKIFGPVKDYECLCGKYKRLKFKGVTCEKCGVEVTLSKVRRERMGHIELAAPVAHIWFLKSLPSRLGMVLDMTLRDIERVLYFEAFVVTDPGMTPLQRRQLLTEDDYYNKLDEYGDDFDAKMGAEGIRELLRTLNVAGEIEILRQELESTGSDTKIKKIAKRLKVLEAFHRSGMKLEWMIMDVLPVLPPDLRPLVPLDGGRFATSDLNDLYRRVINRNNRLKRLLELHAPDIIVRNEKRMLQEAVDSLLDNGRRGKAMTGANKRPLKSLADMIKGKGGRFRQNLLGKRVDYSGRSVITVGPYLRLHQCGLPKKMALELFKPFIFHKLEKQGLASTVKAAKKLVEQEVPEVWDILEEVIREHPIMLNRAPTLHRLGIQAFEPILIEGKAIQLHPLVCAAFNADFDGDQMAVHVPLSLEAQMEARTLMLASNNVLSPANGEPIIVPSQDIVLGLYYMTRDRINAKGEGSLFADVKEVHRAYHTKQVELGTKITVRLREWVKNEAGEFEPVVNRYETTVGRALLSEILPKGLPFEYVNKALKKKEISKLINASFRLCGLRDTVIFADHLMYTGFGFAAKGGISIAVDDMEIPKEKAALLAEANAEVKEIEDQYRQGLVTNGERYNKVVDIWGRAGDKIAKAMMDNLSKQKVIDRDGNEVDQESFNSIYMMADSGARGSAAQIKQLSGMRGLMAKPDGSIIETPITSNFREGLTVLQYFIATHGARKGLADTALKTANSGYLTRRLVDVTQDLVVVEDDCGTSDGFVMKAVVQGGDVIEALRDRILGRVTASDVVDPSSGETLVEAGTLLTEKLVDMIDQSGVDEVKVRTPITCKTRHGLCAHCYGRDLARGKLVNAGEAVGVIAAQSIGEPGTQLTMRTFHIGGAASRAAAASQVEAKSNGTARFSSQMRYVANNKGELVVIGRSCEVVIHDDIGRERERHKVPYGAILLVQDGMAIKAGQTLATWDPHTRPMITEHAGMVKFENVEEGVTVAKQTDDVTGLSTLVVIDGKRRSSSASKLLRPTVKLLDENGVEICIPGTSTPVSMAFPVGAVITVREGQEIGKGDVLARIPQASSKTRDITGGLPRVAELFEARVPKDAGMLAEITGTVSFGKETKGKQRLIVTDVDGVAYETLISKEKQILVHDGQVVNRGETIVDGAVDPHDILRLQGIEALARYIVQEVQEVYRLQGVKISDKHIEVIIRQMLRRVNIADAGETGFITGEQVERGDVMAANEKALEEGKEPARYENVLLGITKASLSTDSFISAASFQETTRVLTEAAIMGKQDELRGLKENVIVGRLIPAGTGLTYHRSRHQQWQGVEQETAETQVTDE.

The Zn(2+) site is built by Cys72, Cys74, Cys87, and Cys90. Residues Asp462, Asp464, and Asp466 each contribute to the Mg(2+) site. Positions 816, 890, 897, and 900 each coordinate Zn(2+).

Belongs to the RNA polymerase beta' chain family. In terms of assembly, the RNAP catalytic core consists of 2 alpha, 1 beta, 1 beta' and 1 omega subunit. When a sigma factor is associated with the core the holoenzyme is formed, which can initiate transcription. It depends on Mg(2+) as a cofactor. Zn(2+) serves as cofactor.

The catalysed reaction is RNA(n) + a ribonucleoside 5'-triphosphate = RNA(n+1) + diphosphate. Functionally, DNA-dependent RNA polymerase catalyzes the transcription of DNA into RNA using the four ribonucleoside triphosphates as substrates. The protein is DNA-directed RNA polymerase subunit beta' of Neisseria meningitidis serogroup A / serotype 4A (strain DSM 15465 / Z2491).